Here is a 156-residue protein sequence, read N- to C-terminus: Small ribosomal subunit protein uS7 (156 aa).

The protein belongs to the universal ribosomal protein uS7 family. In terms of assembly, part of the 30S ribosomal subunit. Contacts proteins S9 and S11.

One of the primary rRNA binding proteins, it binds directly to 16S rRNA where it nucleates assembly of the head domain of the 30S subunit. Is located at the subunit interface close to the decoding center, probably blocks exit of the E-site tRNA. In Acinetobacter baylyi (strain ATCC 33305 / BD413 / ADP1), this protein is Small ribosomal subunit protein uS7.